The sequence spans 417 residues: Tyrosine--tRNA ligase (417 aa).

Residue Tyr-39 participates in L-tyrosine binding. Positions 44–53 (PTASSLHVGH) match the 'HIGH' region motif. L-tyrosine is bound by residues Tyr-176 and Gln-180. Residues 236 to 240 (KMGKS) carry the 'KMSKS' region motif. Position 239 (Lys-239) interacts with ATP. Residues 350–416 (VGVLSLIVRA…GKKKHVLVRP (67 aa)) form the S4 RNA-binding domain.

This sequence belongs to the class-I aminoacyl-tRNA synthetase family. TyrS type 1 subfamily. As to quaternary structure, homodimer.

It is found in the cytoplasm. It carries out the reaction tRNA(Tyr) + L-tyrosine + ATP = L-tyrosyl-tRNA(Tyr) + AMP + diphosphate + H(+). Its function is as follows. Catalyzes the attachment of tyrosine to tRNA(Tyr) in a two-step reaction: tyrosine is first activated by ATP to form Tyr-AMP and then transferred to the acceptor end of tRNA(Tyr). This is Tyrosine--tRNA ligase from Agrobacterium fabrum (strain C58 / ATCC 33970) (Agrobacterium tumefaciens (strain C58)).